The primary structure comprises 1095 residues: Collagen, type I, alpha 1a (1095 aa).

Residues 1-21 (SPAMPVPGPMGPMGPRGPPGS) show a composition bias toward pro residues. Residues 1 to 1011 (SPAMPVPGPM…QPQEKAPDPY (1011 aa)) form a disordered region. Over residues 22–49 (PGASGPQGFTGPPGEPGEAGSAGAMGPR) the composition is skewed to low complexity. The segment covering 58 to 72 (NGEDGESGKPGRGGE) has biased composition (basic and acidic residues). Residues 127 to 145 (TGAAGAAGARGNDGAAGAA) are compositionally biased toward low complexity. Residues 147-160 (PPGPTGPAGPPGFP) show a composition bias toward pro residues. Over residues 161-179 (GGPGAKGDAGAQGGRGPEG) the composition is skewed to gly residues. Low complexity-rich tracts occupy residues 180–223 (PAGA…AGAP), 232–270 (SGPQGAAGAPGPKGNTGEVGAPGAKGEAGAKGEAGAPGV), and 288–297 (EPGAAGARGA). The segment covering 299–311 (GERGGPGGRGFPG) has biased composition (gly residues). Low complexity-rich tracts occupy residues 385–400 (VGARGQPGVMGFPGPK), 477–489 (LPGEAGATGPAGA), 498–544 (ERGA…QGMP), and 577–592 (RGLTGPLGLPGPAGAT). Gly residues predominate over residues 602-611 (GPVGPGGARG). 2 stretches are compositionally biased toward low complexity: residues 625–661 (AGFAGPPGADGQPGAKGEAGDNGAKGDAGPPGAAGPT) and 675–697 (PKGARGAAGPPGATGFPGAAGRV). Positions 699-712 (PPGPSGNPGPPGPA) are enriched in pro residues. Low complexity predominate over residues 804-822 (PGLAGAPGEPGREGSPGNE). The segment covering 848-858 (APGPPGAPGPV) has biased composition (pro residues). Residues 872–893 (PAGPAGSAGPAGPRGPAGALGL) are compositionally biased toward low complexity. Residues 894–908 (RGDKGESGEAGERGM) show a composition bias toward basic and acidic residues. The segment covering 924-960 (AGSSGEQGPAGAAGPAGPRGPAGSAGSPGKDGMSGLP) has biased composition (low complexity). Over residues 976 to 988 (AGPPGPPGPPGAP) the composition is skewed to pro residues. Residues 1062–1095 (TGTWGKLPLLDLAPMDVGAPDQEFGLEVGPVCFL) enclose the Fibrillar collagen NC1 domain.

It belongs to the fibrillar collagen family.

Its subcellular location is the secreted. The protein localises to the extracellular space. It localises to the extracellular matrix. This is Collagen, type I, alpha 1a from Epinephelus caninus (Dogtooth grouper).